A 392-amino-acid polypeptide reads, in one-letter code: MPNFKSKKIKEINLPYSKDDVEFLWLAKNDNVSLIYTKVQEESFFLQIKKAQNGFVIKGDKHTKPSKIGYLQKALKIFKEGFCEDIINEAFGLKNNALIEKTPFIVDNFDELLSKLQGKIYIEIGFGSGRHLLYQAKENPNVLILGVEIYNPALTQVAKLAKVQNVNNILLIQSDARLLLSVLKSKSVEKIFLHFPVPWDKKPHRRVIGKDFCKECARVLTQNGRFELRTDSFEYFNFTLEQFLTFPAPKFSLRKNENLEISSKYEDRWKKQEKNIYDLWVWNFNQECKNYELNEFNLSSVEFSKEDLKKIEQNFKNITIKKDDFFLHFESIYKQDENLLLKVAFGAFNKPEHCYLHLDKTIDFVFKEPFKIQENIKAINELKEILKVQFKI.

Residues glutamate 123, glutamate 148, and aspartate 175 each contribute to the S-adenosyl-L-methionine site. Residues lysine 201 and aspartate 231 each contribute to the substrate site.

Belongs to the class I-like SAM-binding methyltransferase superfamily. TrmB family.

The enzyme catalyses guanosine(46) in tRNA + S-adenosyl-L-methionine = N(7)-methylguanosine(46) in tRNA + S-adenosyl-L-homocysteine. The protein operates within tRNA modification; N(7)-methylguanine-tRNA biosynthesis. Catalyzes the formation of N(7)-methylguanine at position 46 (m7G46) in tRNA. This chain is tRNA (guanine-N(7)-)-methyltransferase, found in Campylobacter jejuni subsp. jejuni serotype O:6 (strain 81116 / NCTC 11828).